A 297-amino-acid chain; its full sequence is 1D-myo-inositol 2-acetamido-2-deoxy-alpha-D-glucopyranoside deacetylase (297 aa).

Residues His11, Asp14, and His154 each coordinate Zn(2+).

It belongs to the MshB deacetylase family. It depends on Zn(2+) as a cofactor.

It carries out the reaction 1D-myo-inositol 2-acetamido-2-deoxy-alpha-D-glucopyranoside + H2O = 1D-myo-inositol 2-amino-2-deoxy-alpha-D-glucopyranoside + acetate. Functionally, catalyzes the deacetylation of 1D-myo-inositol 2-acetamido-2-deoxy-alpha-D-glucopyranoside (GlcNAc-Ins) in the mycothiol biosynthesis pathway. The sequence is that of 1D-myo-inositol 2-acetamido-2-deoxy-alpha-D-glucopyranoside deacetylase from Tsukamurella paurometabola (strain ATCC 8368 / DSM 20162 / CCUG 35730 / CIP 100753 / JCM 10117 / KCTC 9821 / NBRC 16120 / NCIMB 702349 / NCTC 13040) (Corynebacterium paurometabolum).